The sequence spans 439 residues: 23S rRNA (uracil(1939)-C(5))-methyltransferase RlmD (439 aa).

The 59-residue stretch at 5-63 (RKLEHKTYKLNIESFSHEGRGIAHFEDKIIFVSDALPGELVIANRTFSCAKFEEADAKE) folds into the TRAM domain. Cys76, Cys82, Cys85, and Cys164 together coordinate [4Fe-4S] cluster. S-adenosyl-L-methionine is bound by residues Gln271, Phe300, Asn305, Glu321, Asp348, and Asp370. Catalysis depends on Cys396, which acts as the Nucleophile.

Belongs to the class I-like SAM-binding methyltransferase superfamily. RNA M5U methyltransferase family. RlmD subfamily.

It catalyses the reaction uridine(1939) in 23S rRNA + S-adenosyl-L-methionine = 5-methyluridine(1939) in 23S rRNA + S-adenosyl-L-homocysteine + H(+). Catalyzes the formation of 5-methyl-uridine at position 1939 (m5U1939) in 23S rRNA. The chain is 23S rRNA (uracil(1939)-C(5))-methyltransferase RlmD from Vesicomyosocius okutanii subsp. Calyptogena okutanii (strain HA).